The sequence spans 377 residues: Chaperone protein DnaJ (377 aa).

The 66-residue stretch at 5 to 70 folds into the J domain; that stretch reads DYYEILGVSK…QKRAAYDQYG (66 aa). The CR-type zinc finger occupies 132–210; sequence GVTKEIRIPT…CHGHGRVEKT (79 aa). Zn(2+)-binding residues include cysteine 145, cysteine 148, cysteine 162, cysteine 165, cysteine 184, cysteine 187, cysteine 198, and cysteine 201. CXXCXGXG motif repeat units lie at residues 145–152, 162–169, 184–191, and 198–205; these read CDVCHGSG, CPTCHGAG, CPHCQGRG, and CNKCHGHG.

It belongs to the DnaJ family. In terms of assembly, homodimer. Zn(2+) is required as a cofactor.

Its subcellular location is the cytoplasm. Functionally, participates actively in the response to hyperosmotic and heat shock by preventing the aggregation of stress-denatured proteins and by disaggregating proteins, also in an autonomous, DnaK-independent fashion. Unfolded proteins bind initially to DnaJ; upon interaction with the DnaJ-bound protein, DnaK hydrolyzes its bound ATP, resulting in the formation of a stable complex. GrpE releases ADP from DnaK; ATP binding to DnaK triggers the release of the substrate protein, thus completing the reaction cycle. Several rounds of ATP-dependent interactions between DnaJ, DnaK and GrpE are required for fully efficient folding. Also involved, together with DnaK and GrpE, in the DNA replication of plasmids through activation of initiation proteins. In Klebsiella pneumoniae (strain 342), this protein is Chaperone protein DnaJ.